Here is a 327-residue protein sequence, read N- to C-terminus: Annexin A8 (327 aa).

Annexin repeat units lie at residues 21–92, 93–164, 177–249, and 253–324; these read FNPD…ALMY, PPYR…CLLQ, GLAL…TVVK, and NLHS…SLVG. Residues methionine 266, glycine 268, glycine 270, and aspartate 310 each contribute to the Ca(2+) site.

This sequence belongs to the annexin family.

Its function is as follows. This protein is an anticoagulant protein that acts as an indirect inhibitor of the thromboplastin-specific complex, which is involved in the blood coagulation cascade. The chain is Annexin A8 (ANXA8) from Pan troglodytes (Chimpanzee).